The following is a 380-amino-acid chain: Probable inactive dehydrogenase easA (380 aa).

FMN is bound by residues 25 to 27 (PMT), A60, Q102, and H171. 2 residues coordinate substrate: H171 and N174. FMN is bound by residues K223, G299, 324–325 (GR), and R325. Y352 contributes to the substrate binding site.

It belongs to the NADH:flavin oxidoreductase/NADH oxidase family.

Functionally, probable inactive dehydrogenase; part of the gene cluster that mediates the biosynthesis of fungal ergot alkaloid. DmaW catalyzes the first step of ergot alkaloid biosynthesis by condensing dimethylallyl diphosphate (DMAP) and tryptophan to form 4-dimethylallyl-L-tryptophan. The second step is catalyzed by the methyltransferase easF that methylates 4-dimethylallyl-L-tryptophan in the presence of S-adenosyl-L-methionine, resulting in the formation of 4-dimethylallyl-L-abrine. The catalase easC and the FAD-dependent oxidoreductase easE then transform 4-dimethylallyl-L-abrine to chanoclavine-I which is further oxidized by easD in the presence of NAD(+), resulting in the formation of chanoclavine-I aldehyde. Agroclavine dehydrogenase easG then mediates the conversion of chanoclavine-I aldehyde to agroclavine via a non-enzymatic adduct reaction: the substrate is an iminium intermediate that is formed spontaneously from chanoclavine-I aldehyde in the presence of glutathione. The presence of easA is not required to complete this reaction. Further conversion of agroclavine to paspalic acid is a two-step process involving oxidation of agroclavine to elymoclavine and of elymoclavine to paspalic acid, the second step being performed by the elymoclavine oxidase cloA. Paspalic acid is then further converted to D-lysergic acid. Ergopeptines are assembled from D-lysergic acid and three different amino acids by the D-lysergyl-peptide-synthetases composed each of a monomudular and a trimodular nonribosomal peptide synthetase subunit. LpsB and lpsC encode the monomodular subunits responsible for D-lysergic acid activation and incorporation into the ergopeptine backbone. LpsA1 and A2 subunits encode the trimodular nonribosomal peptide synthetase assembling the tripeptide portion of ergopeptines. LpsA1 is responsible for formation of the major ergopeptine, ergotamine, and lpsA2 for alpha-ergocryptine, the minor ergopeptine of the total alkaloid mixture elaborated by C.purpurea. D-lysergyl-tripeptides are assembled by the nonribosomal peptide synthetases and released as N-(D-lysergyl-aminoacyl)-lactams. Cyclolization of the D-lysergyl-tripeptides is performed by the Fe(2+)/2-ketoglutarate-dependent dioxygenase easH which introduces a hydroxyl group into N-(D-lysergyl-aminoacyl)-lactam at alpha-C of the aminoacyl residue followed by spontaneous condensation with the terminal lactam carbonyl group. This is Probable inactive dehydrogenase easA from Claviceps purpurea (Ergot fungus).